The primary structure comprises 231 residues: A-type ATP synthase subunit D (231 aa).

Belongs to the V-ATPase D subunit family. Has multiple subunits with at least A(3), B(3), C, D, E, F, H, I and proteolipid K(x).

It localises to the cell membrane. Component of the A-type ATP synthase that produces ATP from ADP in the presence of a proton gradient across the membrane. The polypeptide is A-type ATP synthase subunit D (Methanobrevibacter smithii (strain ATCC 35061 / DSM 861 / OCM 144 / PS)).